Consider the following 292-residue polypeptide: 2-(5''-triphosphoribosyl)-3'-dephosphocoenzyme-A synthase (292 aa).

This sequence belongs to the CitG/MdcB family.

The catalysed reaction is 3'-dephospho-CoA + ATP = 2'-(5''-triphospho-alpha-D-ribosyl)-3'-dephospho-CoA + adenine. Its function is as follows. Catalyzes the formation of 2-(5''-triphosphoribosyl)-3'-dephosphocoenzyme-A, the precursor of the prosthetic group of the holo-acyl carrier protein (gamma chain) of citrate lyase, from ATP and dephospho-CoA. The protein is 2-(5''-triphosphoribosyl)-3'-dephosphocoenzyme-A synthase of Escherichia coli (strain SMS-3-5 / SECEC).